Reading from the N-terminus, the 239-residue chain is Ribonuclease PH (239 aa).

Residues R87 and G125–R127 contribute to the phosphate site.

This sequence belongs to the RNase PH family. As to quaternary structure, homohexameric ring arranged as a trimer of dimers.

The enzyme catalyses tRNA(n+1) + phosphate = tRNA(n) + a ribonucleoside 5'-diphosphate. Its function is as follows. Phosphorolytic 3'-5' exoribonuclease that plays an important role in tRNA 3'-end maturation. Removes nucleotide residues following the 3'-CCA terminus of tRNAs; can also add nucleotides to the ends of RNA molecules by using nucleoside diphosphates as substrates, but this may not be physiologically important. Probably plays a role in initiation of 16S rRNA degradation (leading to ribosome degradation) during starvation. The chain is Ribonuclease PH from Azotobacter vinelandii (strain DJ / ATCC BAA-1303).